Consider the following 1407-residue polypeptide: DNA-directed RNA polymerase subunit beta' (1407 aa).

Residues Cys70, Cys72, Cys85, and Cys88 each coordinate Zn(2+). Positions 460, 462, and 464 each coordinate Mg(2+). The Zn(2+) site is built by Cys814, Cys888, Cys895, and Cys898.

It belongs to the RNA polymerase beta' chain family. The RNAP catalytic core consists of 2 alpha, 1 beta, 1 beta' and 1 omega subunit. When a sigma factor is associated with the core the holoenzyme is formed, which can initiate transcription. The cofactor is Mg(2+). Requires Zn(2+) as cofactor.

The catalysed reaction is RNA(n) + a ribonucleoside 5'-triphosphate = RNA(n+1) + diphosphate. In terms of biological role, DNA-dependent RNA polymerase catalyzes the transcription of DNA into RNA using the four ribonucleoside triphosphates as substrates. The protein is DNA-directed RNA polymerase subunit beta' of Cronobacter sakazakii (strain ATCC BAA-894) (Enterobacter sakazakii).